The chain runs to 34 residues: Mytilin-B (34 aa).

Intrachain disulfides connect Cys-2-Cys-27, Cys-6-Cys-29, Cys-10-Cys-31, and Cys-15-Cys-34.

It is found in the secreted. Functionally, has antibacterial and antiviral activity. This is Mytilin-B from Mytilus edulis (Blue mussel).